The following is a 122-amino-acid chain: MAPRGRKRKAEAAMVAAAEKQERLANSGEGMEETTVVIEHCTSURVYGXNAAALSQALRLEAPELPVKVNPTKPRRGSFEVTLLRPDGSSAELWTGIKKGPPRKLKFPEPQEVVEELKKYLS.

At Lys20 the chain carries N6-acetyllysine. The cysteinyl-selenocysteine (Cys-Sec); redox-active cross-link spans 41–44 (CTSU). Position 44 (Sec44) is a non-standard amino acid, selenocysteine.

It belongs to the SelWTH family.

In terms of biological role, may be involved in a redox-related process. This Macaca fascicularis (Crab-eating macaque) protein is Selenoprotein H.